Reading from the N-terminus, the 1479-residue chain is C-type mannose receptor 2 (1479 aa).

A signal peptide spans 1 to 30 (MVPIRPALAPWPRHLLRCVLLLGGLRLGHP). Over 31-1413 (ADSAAALLEP…SAALPESPVA (1383 aa)) the chain is Extracellular. The region spanning 37 to 190 (LLEPDVFLIF…SHGKPCTIPF (154 aa)) is the Ricin B-type lectin domain. Residues Cys92 and Cys111 are joined by a disulfide bond. Asn101 and Asn139 each carry an N-linked (GlcNAc...) asparagine glycan. The 49-residue stretch at 181-229 (SHGKPCTIPFKYDNQWFHGCTSTGREDGHLWCATTQDYGKDERWGFCPI) folds into the Fibronectin type-II domain. Cystine bridges form between Cys186/Cys212, Cys200/Cys227, Cys265/Cys358, and Cys334/Cys350. In terms of domain architecture, C-type lectin 1 spans 243–359 (LTDSCYQFNF…CSIALPYVCK (117 aa)). A glycan (N-linked (GlcNAc...) asparagine) is linked at Asn363. 7 consecutive C-type lectin domains span residues 388–504 (FQGH…SICK), 527–643 (HSPS…RYIC), 677–808 (KLRH…WICK), 831–950 (FQEA…YICK), 978–1106 (FLNK…GFIC), 1131–1242 (YLNH…GAVC), and 1271–1391 (FREH…GVVC). 7 disulfide bridges follow: Cys409–Cys503, Cys480–Cys495, Cys617–Cys634, Cys703–Cys807, Cys784–Cys799, Cys852–Cys949, and Cys926–Cys941. The N-linked (GlcNAc...) asparagine glycan is linked to Asn1028. A disulfide bridge links Cys1077 with Cys1097. Lys1141 is covalently cross-linked (Glycyl lysine isopeptide (Lys-Gly) (interchain with G-Cter in SUMO1)). A disulfide bridge connects residues Cys1219 and Cys1233. The N-linked (GlcNAc...) asparagine glycan is linked to Asn1348. A disulfide bond links Cys1367 and Cys1382. Residues 1414–1434 (LVVVLTAVLLLLALMTAALIL) form a helical membrane-spanning segment. Residues 1435–1479 (YRRRQSAERGSFEGARYSRSSHSGPAEATEKNILVSDMEMNEQQE) are Cytoplasmic-facing. The disordered stretch occupies residues 1446–1479 (FEGARYSRSSHSGPAEATEKNILVSDMEMNEQQE).

Interacts directly with PLAUR/UPAR and PLAU/pro-UPA to form a tri-molecular complex. Interacts with collagen V and with C-terminal region of type I collagen/COL1A1. Post-translationally, phosphorylated. Highly expressed in heart, lung and kidney, but little or no expression in brain, thymus or adult liver. Expressed at highly endothelialized sites such as those in choroid plexus and kidney glomerulai as well as in chondrocytes in cartilaginous regions of the embryo.

It is found in the membrane. In terms of biological role, may play a role as endocytotic lectin receptor displaying calcium-dependent lectin activity. Internalizes glycosylated ligands from the extracellular space for release in an endosomal compartment via clathrin-mediated endocytosis. May be involved in plasminogen activation system controlling the extracellular level of PLAUR/PLAU, and thus may regulate protease activity at the cell surface. May contribute to cellular uptake, remodeling and degradation of extracellular collagen matrices. May participate in remodeling of extracellular matrix cooperating with the matrix metalloproteinases (MMPs). In Mus musculus (Mouse), this protein is C-type mannose receptor 2 (Mrc2).